Reading from the N-terminus, the 382-residue chain is Gap junction alpha-1 protein (382 aa).

Residues 2 to 23 (GDWSALGKLLDKVQAYSTAGGK) are Cytoplasmic-facing. A Phosphoserine modification is found at Ser-5. The chain crosses the membrane as a helical span at residues 24–44 (VWLSVLFIFRILLLGTAVESA). Residues 45-76 (WGDEQSAFRCNTQQPGCENVCYDKSFPISHVR) lie on the Extracellular side of the membrane. Disulfide bonds link Cys-54/Cys-192 and Cys-187/Cys-198. The helical transmembrane segment at 77 to 97 (FWVLQIIFVSVPTLLYLAHVF) threads the bilayer. Residues 98–155 (YVMRKEEKLNKKEEELKVAQTDGVNVEMHLKQIEIKKFKYGIEEHGKVKMRGGLLRTY) lie on the Cytoplasmic side of the membrane. Lys-144 participates in a covalent cross-link: Glycyl lysine isopeptide (Lys-Gly) (interchain with G-Cter in SUMO). Residues 156–176 (IISILFKSVFEVAFLLIQWYI) form a helical membrane-spanning segment. Residues 177–207 (YGFSLSAVYTCKRDPCPHQVDCFLSRPTEKT) lie on the Extracellular side of the membrane. A helical membrane pass occupies residues 208 to 228 (IFIIFMLVVSLVSLALNIIEL). The Cytoplasmic segment spans residues 229-382 (FYAFFKGVKD…SRPRPDDLEI (154 aa)). Lys-237 participates in a covalent cross-link: Glycyl lysine isopeptide (Lys-Gly) (interchain with G-Cter in SUMO). Residues 244–382 (SDPYHATTGP…SRPRPDDLEI (139 aa)) form an interaction with NOV region. At Tyr-247 the chain carries Phosphotyrosine. Phosphoserine is present on residues Ser-255, Ser-257, and Ser-262. The segment at 264-382 (KYAYFNGCSS…SRPRPDDLEI (119 aa)) is interaction with UBQLN4. Residue Cys-271 is modified to S-nitrosocysteine. Thr-275 is modified (phosphothreonine). 2 positions are modified to phosphoserine: Ser-306 and Ser-314. The segment covering 317–332 (QNRMGQAGSTISNSHA) has biased composition (polar residues). Residues 317 to 382 (QNRMGQAGST…SRPRPDDLEI (66 aa)) are disordered. Position 325 is a phosphoserine; by CK1 (Ser-325). Thr-326 carries the post-translational modification Phosphothreonine. Phosphoserine; by CK1 is present on residues Ser-328 and Ser-330. Residues 342–351 (QNSKKLDAGH) are compositionally biased toward basic and acidic residues. Residues Ser-344 and Ser-365 each carry the phosphoserine modification. Residues 362-374 (RPSSRASSRASSR) are compositionally biased toward low complexity. Position 368 is a phosphoserine; by PKC/PRKCG and PKC/PRKCD (Ser-368). Phosphoserine occurs at positions 369 and 373.

This sequence belongs to the connexin family. Alpha-type (group II) subfamily. A connexon is composed of a hexamer of connexins. Interacts with SGSM3. Interacts with RIC1/CIP150. Interacts with CNST and CSNK1D. Interacts (via C-terminus) with TJP1. Interacts (via C-terminus) with SRC (via SH3 domain). Interacts (not ubiquitinated) with UBQLN4 (via UBA domain). Interacts with NOV. Interacts with TMEM65. Interacts with ANK3/ANKG and PKP2. Post-translationally, phosphorylation at Ser-325, Ser-328 and Ser-330 by CK1 modulates gap junction assembly. Phosphorylated at Ser-368 by PRKCG; phosphorylation induces disassembly of gap junction plaques and inhibition of gap junction activity. Phosphorylation at Ser-368 by PRKCD triggers its internalization into small vesicles leading to proteasome-mediated degradation. Sumoylated with SUMO1, SUMO2 and SUMO3, which may regulate the level of functional Cx43 gap junctions at the plasma membrane. May be desumoylated by SENP1 or SENP2. In terms of processing, S-nitrosylation at Cys-271 is enriched at the muscle endothelial gap junction in arteries, it augments channel permeability and may regulate of smooth muscle cell to endothelial cell communication. Post-translationally, acetylated in the developing cortex; leading to delocalization from the cell membrane.

It is found in the cell membrane. The protein localises to the cell junction. Its subcellular location is the gap junction. It localises to the endoplasmic reticulum. Its function is as follows. Gap junction protein that acts as a regulator of bladder capacity. A gap junction consists of a cluster of closely packed pairs of transmembrane channels, the connexons, through which materials of low MW diffuse from one cell to a neighboring cell. May play a critical role in the physiology of hearing by participating in the recycling of potassium to the cochlear endolymph. Negative regulator of bladder functional capacity: acts by enhancing intercellular electrical and chemical transmission, thus sensitizing bladder muscles to cholinergic neural stimuli and causing them to contract. May play a role in cell growth inhibition through the regulation of NOV expression and localization. Plays an essential role in gap junction communication in the ventricles. The polypeptide is Gap junction alpha-1 protein (GJA1) (Sus scrofa (Pig)).